Here is a 502-residue protein sequence, read N- to C-terminus: Alpha-globin transcription factor CP2 (502 aa).

The Grh/CP2 DB domain occupies 61-300 (ENKILPFQYV…SPGFNSSHSS (240 aa)). The interval 133 to 395 (EHQQLEGWRW…VRPRLTIYVC (263 aa)) is DNA-binding. Disordered stretches follow at residues 238–268 (FKPKGADRKQKTDREKMEKRTPHEKEKYQPS) and 294–325 (FNSSHSSFSLGEGNGSPNHQPEPPPPVTDNLL). Positions 241-265 (KGADRKQKTDREKMEKRTPHEKEKY) are enriched in basic and acidic residues. S353 is modified (phosphoserine).

This sequence belongs to the grh/CP2 family. CP2 subfamily. In terms of assembly, binds to DNA as a dimer, isoform 3 does not bind to DNA or affect the binding of isoform 1 to DNA. Interacts with UBP1 and PIAS1, and is probably part of a complex containing TFCP2, UBP1 and PIAS1. Component of the SSP (stage selector protein) complex, which appears to be a heteromer of TFCP2 and 2 copies of NFE4. As to expression, ubiquitous. Expressed in brain, ovary, kidney, thymus, spleen, liver, adrenal, heart and lung (at protein level).

It is found in the nucleus. Binds a variety of cellular and viral promoters including fibrinogen, alpha-globin, SV40 and HIV-1 promoters. Activation of the alpha-globin promoter in erythroid cells is via synergistic interaction with UBP1. Functions as part of the SSP (stage selector protein) complex. Facilitates the interaction of the gamma-globin genes with enhancer elements contained in the locus control region in fetal erythroid cells. Interacts by binding to the stage selector element (SSE) in the proximal gamma-globin promoter. The polypeptide is Alpha-globin transcription factor CP2 (TFCP2) (Homo sapiens (Human)).